We begin with the raw amino-acid sequence, 115 residues long: Anamorsin homolog 2 (115 aa).

Residues 30–115 (VKEATKGEDC…KVKLNLTDDI (86 aa)) are disordered. [2Fe-2S] cluster is bound by residues Cys39, Cys46, Cys49, and Cys51. Positions 39–51 (CTTRRRACKNCTC) are fe-S binding site A. Positions 77, 80, 88, and 91 each coordinate [4Fe-4S] cluster. 2 consecutive short sequence motifs (cx2C motif) follow at residues 77 to 80 (CGNC) and 88 to 91 (CATC). Residues 77 to 91 (CGNCAKGDAFRCATC) form a fe-S binding site B region.

It belongs to the anamorsin family. In terms of assembly, monomer. [2Fe-2S] cluster serves as cofactor. Requires [4Fe-4S] cluster as cofactor.

Its subcellular location is the cytoplasm. It localises to the mitochondrion intermembrane space. In terms of biological role, component of the cytosolic iron-sulfur (Fe-S) protein assembly (CIA) machinery. Required for the maturation of extramitochondrial Fe-S proteins. Part of an electron transfer chain functioning in an early step of cytosolic Fe-S biogenesis, facilitating the de novo assembly of a [4Fe-4S] cluster on the cytosolic Fe-S scaffold complex. Electrons are transferred from NADPH via a FAD- and FMN-containing diflavin oxidoreductase. Together with the diflavin oxidoreductase, also required for the assembly of the diferric tyrosyl radical cofactor of ribonucleotide reductase (RNR), probably by providing electrons for reduction during radical cofactor maturation in the catalytic small subunit. The polypeptide is Anamorsin homolog 2 (Trypanosoma cruzi (strain CL Brener)).